The sequence spans 415 residues: 3-isopropylmalate dehydratase large subunit (415 aa).

[4Fe-4S] cluster is bound by residues C297, C355, and C358.

It belongs to the aconitase/IPM isomerase family. LeuC type 2 subfamily. In terms of assembly, heterodimer of LeuC and LeuD. [4Fe-4S] cluster is required as a cofactor.

It catalyses the reaction (2R,3S)-3-isopropylmalate = (2S)-2-isopropylmalate. It participates in amino-acid biosynthesis; L-leucine biosynthesis; L-leucine from 3-methyl-2-oxobutanoate: step 2/4. Catalyzes the isomerization between 2-isopropylmalate and 3-isopropylmalate, via the formation of 2-isopropylmaleate. This is 3-isopropylmalate dehydratase large subunit from Sulfurisphaera tokodaii (strain DSM 16993 / JCM 10545 / NBRC 100140 / 7) (Sulfolobus tokodaii).